Reading from the N-terminus, the 209-residue chain is Kynurenine formamidase (209 aa).

Position 20 (W20) interacts with substrate. Residues H50, H54, and D56 each coordinate Zn(2+). Catalysis depends on H60, which acts as the Proton donor/acceptor. H161 and E173 together coordinate Zn(2+).

The protein belongs to the Cyclase 1 superfamily. KynB family. In terms of assembly, homodimer. Zn(2+) serves as cofactor.

The enzyme catalyses N-formyl-L-kynurenine + H2O = L-kynurenine + formate + H(+). It participates in amino-acid degradation; L-tryptophan degradation via kynurenine pathway; L-kynurenine from L-tryptophan: step 2/2. Catalyzes the hydrolysis of N-formyl-L-kynurenine to L-kynurenine, the second step in the kynurenine pathway of tryptophan degradation. The chain is Kynurenine formamidase from Bacillus thuringiensis (strain Al Hakam).